Reading from the N-terminus, the 402-residue chain is MPLNLNCYLLNLKIDGVMKKYPEDFIVEEITPEGIVLEAGKDIGFKEENKHDWNGSFIHFTMEKINWNTMDAIRELARRTKTKRKNFGFAGTKDKFALTTQRVGCFGIKPEKLEEIKNSIKDITIRDIQKTNIKLRMGHLWGNKFTIKIRLNETDKYYNDISKYEEILKNKNLDYILNYYGTQRFGTFRPITHIVGKFIYNRDFESAFYTYCGAPINETGVVKEAREMVDNGEFEKALKLFPKKSYYNEIKMIRHYIKTGNYKECFKVLPPQLSSMFVNAYQSYLFNEMINIRHRDYSFDILDGDVVEEGAPTGNILGSDTILSDGIQGDIEKYIIEKENLDLKKFKIEDYGNFPGTRRKLITKIYDFESSIDKDNNIISISFKMERGNYATVVLREIISEI.

The active-site Nucleophile is the D94. Residues 175 to 364 (YILNYYGTQR…PGTRRKLITK (190 aa)) enclose the TRUD domain.

The protein belongs to the pseudouridine synthase TruD family.

It catalyses the reaction uridine(13) in tRNA = pseudouridine(13) in tRNA. Could be responsible for synthesis of pseudouridine from uracil-13 in transfer RNAs. The chain is Probable tRNA pseudouridine synthase D from Methanococcus aeolicus (strain ATCC BAA-1280 / DSM 17508 / OCM 812 / Nankai-3).